The primary structure comprises 424 residues: GTPase Obg (424 aa).

The Obg domain occupies 1–158 (MFYDQAKIYV…RNLLLELKLL (158 aa)). The 171-residue stretch at 159–329 (ADVGLVGFPN…LVYAAAKALP (171 aa)) folds into the OBG-type G domain. GTP contacts are provided by residues 165–172 (GFPNVGKS), 190–194 (FTTLV), 212–215 (DIPG), 282–285 (NKMD), and 310–312 (SAA). The Mg(2+) site is built by Ser172 and Thr192. One can recognise an OCT domain in the interval 347–424 (TQASAPHRFE…IAGIEFEWEE (78 aa)).

Belongs to the TRAFAC class OBG-HflX-like GTPase superfamily. OBG GTPase family. In terms of assembly, monomer. Mg(2+) serves as cofactor.

Its subcellular location is the cytoplasm. Its function is as follows. An essential GTPase which binds GTP, GDP and possibly (p)ppGpp with moderate affinity, with high nucleotide exchange rates and a fairly low GTP hydrolysis rate. Plays a role in control of the cell cycle, stress response, ribosome biogenesis and in those bacteria that undergo differentiation, in morphogenesis control. This chain is GTPase Obg, found in Desulfitobacterium hafniense (strain Y51).